Here is a 292-residue protein sequence, read N- to C-terminus: 4-hydroxybenzoate octaprenyltransferase (292 aa).

9 helical membrane passes run isoleucine 24–methionine 44, leucine 47–isoleucine 67, alanine 97–valine 117, threonine 119–tyrosine 139, valine 145–alanine 165, tryptophan 171–valine 191, histidine 214–asparagine 234, leucine 238–isoleucine 258, and phenylalanine 270–valine 290.

This sequence belongs to the UbiA prenyltransferase family. Mg(2+) is required as a cofactor.

It localises to the cell inner membrane. The enzyme catalyses all-trans-octaprenyl diphosphate + 4-hydroxybenzoate = 4-hydroxy-3-(all-trans-octaprenyl)benzoate + diphosphate. It participates in cofactor biosynthesis; ubiquinone biosynthesis. Functionally, catalyzes the prenylation of para-hydroxybenzoate (PHB) with an all-trans polyprenyl group. Mediates the second step in the final reaction sequence of ubiquinone-8 (UQ-8) biosynthesis, which is the condensation of the polyisoprenoid side chain with PHB, generating the first membrane-bound Q intermediate 3-octaprenyl-4-hydroxybenzoate. This Pseudoalteromonas translucida (strain TAC 125) protein is 4-hydroxybenzoate octaprenyltransferase.